A 188-amino-acid chain; its full sequence is Elongation factor P (188 aa).

Residue K34 is modified to N6-(3,6-diaminohexanoyl)-5-hydroxylysine.

The protein belongs to the elongation factor P family. In terms of processing, may be beta-lysylated on the epsilon-amino group of Lys-34 by the combined action of EpmA and EpmB, and then hydroxylated on the C5 position of the same residue by EpmC (if this protein is present). Lysylation is critical for the stimulatory effect of EF-P on peptide-bond formation. The lysylation moiety may extend toward the peptidyltransferase center and stabilize the terminal 3-CCA end of the tRNA. Hydroxylation of the C5 position on Lys-34 may allow additional potential stabilizing hydrogen-bond interactions with the P-tRNA.

It is found in the cytoplasm. The protein operates within protein biosynthesis; polypeptide chain elongation. In terms of biological role, involved in peptide bond synthesis. Alleviates ribosome stalling that occurs when 3 or more consecutive Pro residues or the sequence PPG is present in a protein, possibly by augmenting the peptidyl transferase activity of the ribosome. Modification of Lys-34 is required for alleviation. The protein is Elongation factor P of Xanthomonas axonopodis pv. citri (strain 306).